We begin with the raw amino-acid sequence, 218 residues long: uncharacterized protein (218 aa).

Residues 111-193 enclose the Toprim domain; it reads NSIYLVEGDF…ITKVIEIKAA (83 aa).

This is an uncharacterized protein from Mycoplasma genitalium (strain ATCC 33530 / DSM 19775 / NCTC 10195 / G37) (Mycoplasmoides genitalium).